The sequence spans 218 residues: Elongation factor Ts (218 aa).

Residues T82–V85 form an involved in Mg(2+) ion dislocation from EF-Tu region.

The protein belongs to the EF-Ts family.

The protein resides in the cytoplasm. Associates with the EF-Tu.GDP complex and induces the exchange of GDP to GTP. It remains bound to the aminoacyl-tRNA.EF-Tu.GTP complex up to the GTP hydrolysis stage on the ribosome. The protein is Elongation factor Ts of Prochlorococcus marinus (strain NATL1A).